The sequence spans 161 residues: Probable chemoreceptor glutamine deamidase CheD (161 aa).

Belongs to the CheD family.

It carries out the reaction L-glutaminyl-[protein] + H2O = L-glutamyl-[protein] + NH4(+). Functionally, probably deamidates glutamine residues to glutamate on methyl-accepting chemotaxis receptors (MCPs), playing an important role in chemotaxis. The sequence is that of Probable chemoreceptor glutamine deamidase CheD from Trichlorobacter lovleyi (strain ATCC BAA-1151 / DSM 17278 / SZ) (Geobacter lovleyi).